A 201-amino-acid polypeptide reads, in one-letter code: 3-isopropylmalate dehydratase small subunit (201 aa).

Belongs to the LeuD family. LeuD type 1 subfamily. Heterodimer of LeuC and LeuD.

The catalysed reaction is (2R,3S)-3-isopropylmalate = (2S)-2-isopropylmalate. It participates in amino-acid biosynthesis; L-leucine biosynthesis; L-leucine from 3-methyl-2-oxobutanoate: step 2/4. In terms of biological role, catalyzes the isomerization between 2-isopropylmalate and 3-isopropylmalate, via the formation of 2-isopropylmaleate. The chain is 3-isopropylmalate dehydratase small subunit from Ruegeria sp. (strain TM1040) (Silicibacter sp.).